A 414-amino-acid chain; its full sequence is Probable aminotransferase TAT2 (414 aa).

It belongs to the class-I pyridoxal-phosphate-dependent aminotransferase family. Pyridoxal 5'-phosphate serves as cofactor.

The polypeptide is Probable aminotransferase TAT2 (Arabidopsis thaliana (Mouse-ear cress)).